We begin with the raw amino-acid sequence, 219 residues long: Large ribosomal subunit protein uL4 (219 aa).

The interval 43-101 is disordered; that stretch reads AAARQGTHKTKRRGEVRGGGKKPYRQKGTGRARQGSTRAPQFAGGGVVHGPQPRDYSQR. The span at 61 to 72 shows a compositional bias: basic residues; it reads GGKKPYRQKGTG.

This sequence belongs to the universal ribosomal protein uL4 family. As to quaternary structure, part of the 50S ribosomal subunit.

Its function is as follows. One of the primary rRNA binding proteins, this protein initially binds near the 5'-end of the 23S rRNA. It is important during the early stages of 50S assembly. It makes multiple contacts with different domains of the 23S rRNA in the assembled 50S subunit and ribosome. In terms of biological role, forms part of the polypeptide exit tunnel. In Streptomyces coelicolor (strain ATCC BAA-471 / A3(2) / M145), this protein is Large ribosomal subunit protein uL4.